The chain runs to 214 residues: Probable GTP-binding protein EngB (214 aa).

The EngB-type G domain occupies 31–214 (GPPEIAFAGR…LRAAILQTIA (184 aa)). GTP-binding positions include 39–46 (GRSNVGKS), 66–70 (GRTQE), 93–96 (DMPG), 160–163 (TKSD), and 194–196 (TSS). Residues S46 and T68 each contribute to the Mg(2+) site.

This sequence belongs to the TRAFAC class TrmE-Era-EngA-EngB-Septin-like GTPase superfamily. EngB GTPase family. Requires Mg(2+) as cofactor.

Necessary for normal cell division and for the maintenance of normal septation. In Bartonella tribocorum (strain CIP 105476 / IBS 506), this protein is Probable GTP-binding protein EngB.